Consider the following 127-residue polypeptide: Protein NEGATIVE REGULATOR OF RESISTANCE (127 aa).

Disordered regions lie at residues 1–28 (MDAT…VDEV) and 47–127 (TRRL…RAPA). Positions 112–127 (PPSDAPATPRSARAPA) are enriched in low complexity.

It belongs to the NPR1-interactor family. In terms of assembly, interacts with NPR1/NH1. Interacts with NPR3/NH3.

The protein resides in the nucleus. In terms of biological role, acts as a negative regulator of disease resistance. Acts on basal resistance, age-related resistance and resistance mediated by the LRR receptor kinase XA21. Plants over-expressing NRR display enhanced susceptibility to the bacterial blight Xanthomonas oryzae pv. oryzae (Xoo). Binds to and represses NPR1/NH1-mediated transcriptional activation of LG2 in vitro. This is Protein NEGATIVE REGULATOR OF RESISTANCE from Oryza sativa subsp. japonica (Rice).